We begin with the raw amino-acid sequence, 323 residues long: Phosphatidylethanolamine:ceramide ethanolaminephosphotransferase (323 aa).

Residues 1–26 are Cytoplasmic-facing; it reads MAVPPVEMYSGSFWNRMRKPLPLRTQ. Residues 27 to 47 form a helical membrane-spanning segment; it reads VIRFTVVFVIVSFILVVALQI. Over 48-74 the chain is Extracellular; the sequence is THERMPDPKVTKPLPDLGFELLTKVPG. The helical transmembrane segment at 75–95 threads the bilayer; it reads MYVLADCCIGFLNILSVFTAF. Over 96–147 the chain is Cytoplasmic; sequence KLYLLHRHCVGSGEPELPCNIPGVSRFFLSVWLCKENCRIELRNIHTIAWIR. A helical transmembrane segment spans residues 148 to 168; it reads FITSYALLLLSRSIIMVVTSL. The Extracellular portion of the chain corresponds to 169 to 187; that stretch reads PNPDDLCQNPPKIENRVKD. The helical transmembrane segment at 188–208 threads the bilayer; the sequence is ILLTVLTAGAGSIHCGDLMYS. Residues 209-233 lie on the Cytoplasmic side of the membrane; that stretch reads GHTVILTLHLMFHWIYGAMVHWSFR. Residues 234–254 traverse the membrane as a helical segment; that stretch reads PVVTVVAIFGYYCIVASRFHY. Residues 255-257 lie on the Extracellular side of the membrane; that stretch reads TDD. A helical transmembrane segment spans residues 258–278; the sequence is VLVAIYLTIATFIAVGHNADG. The Cytoplasmic portion of the chain corresponds to 279-323; sequence APWQLQLFIRWWPCCGANSREVAEDGVPVAIVIKNEEMMNFEGKS.

The protein belongs to the sphingomyelin synthase family.

The protein resides in the membrane. The enzyme catalyses an N-acylsphing-4-enine + a 1,2-diacyl-sn-glycero-3-phosphoethanolamine = an N-acylsphing-4-enine 1-phosphoethanolamine + a 1,2-diacyl-sn-glycerol. The catalysed reaction is an N-acylsphinganine + a 1,2-diacyl-sn-glycero-3-phosphoethanolamine = an N-acylsphinganine-1-phosphoethanolamine + a 1,2-diacyl-sn-glycerol. Its function is as follows. Predominantly synthesizes ethanolamine-phosphorylceramide (EPC), with minimal sphingomyelin (SM)/inositol phosphorylceramide (IPC) synthase activity. Specificity is likely to be defined by residues in the lumenal catalytic domain that interact with the polar head groups of the phospholipid donors. EPC is synthesized by both stages of the parasite life cycle, bloodstream forms (BSF) and procyclic forms (PCF), by transferring the phosphoethanolamine from a 1,2-diacyl-sn-glycero-3-phosphoethanolamine to an N-acylsphing-4-enine (ceramide) or an N-acylsphinganine (dihydroceramide). Similarly, SM is synthesized by transferring the phosphocholine from a 1,2-diacyl-sn-glycero-3-phosphocholine to ceramide or dihydroceramide by BSF and PCF, while IPC is confined to PCF. The ceramide/dihydroceramide ratios are skewed towards dihydroceramide in PCF parasites and ceramide in BSF parasites, this is likely due to differential expression and/or regulation of dihydroceramide desaturase, the enzyme responsible for converting dihydroceramide to ceramide. In Trypanosoma brucei brucei, this protein is Phosphatidylethanolamine:ceramide ethanolaminephosphotransferase.